The primary structure comprises 435 residues: Flavonol 7-O-rhamnosyltransferase (435 aa).

Gln18 lines the UDP pocket. Gln18 contributes to the UDP-beta-L-rhamnose binding site. His21 serves as the catalytic Proton acceptor. A quercetin-binding site is contributed by His21. Asp119 serves as the catalytic Charge relay. Positions 250, 315, 332, 336, 337, and 340 each coordinate UDP. Residues Ser250, Ala315, His332, Gly336, Ser337, and Glu340 each coordinate UDP-beta-L-rhamnose.

Belongs to the UDP-glycosyltransferase family. Highly expressed in floral buds. Expressed in stems, leaves and flowers. Expressed at low levels in roots and siliques. Expressed on the adaxial side of cotyledons and emerging leaves, in trichomes, root columella cells, and the late elongation/early differentiation zone of roots.

It carries out the reaction quercitrin + UDP-beta-L-rhamnose = quercetin 3,7-bis-O-alpha-L-rhamnoside + UDP + H(+). The catalysed reaction is quercetin 3-O-beta-D-glucoside + UDP-beta-L-rhamnose = quercetin 3-O-beta-D-glucoside-7-O-alpha-L-rhamnoside + UDP + H(+). The protein operates within flavonoid metabolism. Its function is as follows. Flavonol 7-O-rhamnosyltransferase that catalyzes the transfer of rhamnose from UDP-rhamnose to the 7-OH position of 3-O-glycosylated flavonols, such as kaempferol 3-O-rhamnoside, kaempferol 3-O-glucoside, quercetin 3-O-glucoside, quercetin 3-O-galactoside, quercetin 3-O-rhamnoside and isorhamnetin 3-O-glucoside. Is able to glycosylate the flavonols quercetin and kaempferol to yield quercetin 7-O-rhamnoside and kaempferol 7-O-rhamnoside. Shows a strict specificity for UDP-rhamnose as sugar donor. Does not act on 3-O-glycosylated anthocyanins. The accumulation of kaempferol 3-O-rhamnoside-7-O-rhamnoside inhibits basipetal auxin transport, which influences auxin distribution and plant organ development. The polypeptide is Flavonol 7-O-rhamnosyltransferase (Arabidopsis thaliana (Mouse-ear cress)).